The primary structure comprises 507 residues: ATP synthase subunit alpha, plastid (507 aa).

170–177 is an ATP binding site; sequence GDRQTGKT.

Belongs to the ATPase alpha/beta chains family. F-type ATPases have 2 components, CF(1) - the catalytic core - and CF(0) - the membrane proton channel. CF(1) has five subunits: alpha(3), beta(3), gamma(1), delta(1), epsilon(1). CF(0) has four main subunits: a, b, b' and c.

The protein resides in the plastid membrane. It catalyses the reaction ATP + H2O + 4 H(+)(in) = ADP + phosphate + 5 H(+)(out). Its function is as follows. Produces ATP from ADP in the presence of a proton gradient across the membrane. The alpha chain is a regulatory subunit. The sequence is that of ATP synthase subunit alpha, plastid from Cuscuta obtusiflora (Peruvian dodder).